The primary structure comprises 251 residues: Phosphoribosylaminoimidazole-succinocarboxamide synthase (251 aa).

It belongs to the SAICAR synthetase family.

The enzyme catalyses 5-amino-1-(5-phospho-D-ribosyl)imidazole-4-carboxylate + L-aspartate + ATP = (2S)-2-[5-amino-1-(5-phospho-beta-D-ribosyl)imidazole-4-carboxamido]succinate + ADP + phosphate + 2 H(+). It functions in the pathway purine metabolism; IMP biosynthesis via de novo pathway; 5-amino-1-(5-phospho-D-ribosyl)imidazole-4-carboxamide from 5-amino-1-(5-phospho-D-ribosyl)imidazole-4-carboxylate: step 1/2. The polypeptide is Phosphoribosylaminoimidazole-succinocarboxamide synthase (Phenylobacterium zucineum (strain HLK1)).